The chain runs to 389 residues: Chalcone synthase E (389 aa).

Residue Cys-164 is part of the active site.

It belongs to the thiolase-like superfamily. Chalcone/stilbene synthases family.

It catalyses the reaction (E)-4-coumaroyl-CoA + 3 malonyl-CoA + 3 H(+) = 2',4,4',6'-tetrahydroxychalcone + 3 CO2 + 4 CoA. Its pathway is secondary metabolite biosynthesis; flavonoid biosynthesis. In terms of biological role, the primary product of this enzyme is 4,2',4',6'-tetrahydroxychalcone (also termed naringenin-chalcone or chalcone) which can under specific conditions spontaneously isomerize into naringenin. This chain is Chalcone synthase E (CHSE), found in Ipomoea purpurea (Common morning glory).